The following is a 217-amino-acid chain: MNEDPQKKDEPFFKDVEFKASYGKADQIPSQGTPQIAFAGRSNAGKSSLLNAILERKSLAKVSSTPGKTKLLNFFFVNHSIYLVDLPGFGYSANSHKDHEAMMGLLMDYLNLAKDLKCLFLVCDSQRELPEEELELIGTCFERNIKPVLVRTKIDKLNQSDLSKLRKKMKNIHELYPMLETVLVSNKSGKGLPELRKIVYSLIETVKNRLERIEEIS.

The EngB-type G domain occupies 32 to 205 (GTPQIAFAGR…RKIVYSLIET (174 aa)). GTP-binding positions include 40–47 (GRSNAGKS), 67–71 (GKTKL), 85–88 (DLPG), 152–155 (TKID), and 184–186 (VSN). Mg(2+) is bound by residues serine 47 and threonine 69.

It belongs to the TRAFAC class TrmE-Era-EngA-EngB-Septin-like GTPase superfamily. EngB GTPase family. It depends on Mg(2+) as a cofactor.

Necessary for normal cell division and for the maintenance of normal septation. The chain is Probable GTP-binding protein EngB from Leptospira interrogans serogroup Icterohaemorrhagiae serovar copenhageni (strain Fiocruz L1-130).